A 172-amino-acid chain; its full sequence is RNA silencing suppressor p19 (172 aa).

The span at Met-1–Asp-20 shows a compositional bias: basic and acidic residues. The segment at Met-1–Pro-37 is disordered.

The protein belongs to the tombusvirus protein p19 family. As to quaternary structure, homodimer.

In terms of biological role, viral suppressor of RNA silencing which binds specifically to silencing RNAs (siRNAs). Acts as a molecular caliper to specifically select siRNAs based on the length of the duplex region of the RNA. The polypeptide is RNA silencing suppressor p19 (Tomato bushy stunt virus (strain Ja6) (TBSV)).